The following is a 184-amino-acid chain: ATP synthase subunit delta (184 aa).

This sequence belongs to the ATPase delta chain family. In terms of assembly, F-type ATPases have 2 components, F(1) - the catalytic core - and F(0) - the membrane proton channel. F(1) has five subunits: alpha(3), beta(3), gamma(1), delta(1), epsilon(1). F(0) has three main subunits: a(1), b(2) and c(10-14). The alpha and beta chains form an alternating ring which encloses part of the gamma chain. F(1) is attached to F(0) by a central stalk formed by the gamma and epsilon chains, while a peripheral stalk is formed by the delta and b chains.

It is found in the cell inner membrane. Its function is as follows. F(1)F(0) ATP synthase produces ATP from ADP in the presence of a proton or sodium gradient. F-type ATPases consist of two structural domains, F(1) containing the extramembraneous catalytic core and F(0) containing the membrane proton channel, linked together by a central stalk and a peripheral stalk. During catalysis, ATP synthesis in the catalytic domain of F(1) is coupled via a rotary mechanism of the central stalk subunits to proton translocation. In terms of biological role, this protein is part of the stalk that links CF(0) to CF(1). It either transmits conformational changes from CF(0) to CF(1) or is implicated in proton conduction. This Dichelobacter nodosus (strain VCS1703A) protein is ATP synthase subunit delta.